Reading from the N-terminus, the 297-residue chain is Mitochondrial thiamine pyrophosphate carrier 1 (297 aa).

3 Solcar repeats span residues 13–94 (SHVF…TNAA), 102–195 (PPTI…IRAR), and 196–295 (WPET…LMRV). The next 6 membrane-spanning stretches (helical) occupy residues 19-36 (LVSG…IAPL), 75-91 (IMYI…YSYT), 109-128 (LAGA…FDVL), 163-187 (GLGG…AMFG), 203-219 (TAGA…TFPL), and 270-287 (GIGL…INLW).

The protein belongs to the mitochondrial carrier (TC 2.A.29) family.

It is found in the mitochondrion inner membrane. Mitochondrial transporter that mediates uptake of thiamine pyrophosphate (ThPP) into mitochondria. This chain is Mitochondrial thiamine pyrophosphate carrier 1 (TPC1), found in Vanderwaltozyma polyspora (strain ATCC 22028 / DSM 70294 / BCRC 21397 / CBS 2163 / NBRC 10782 / NRRL Y-8283 / UCD 57-17) (Kluyveromyces polysporus).